Reading from the N-terminus, the 277-residue chain is Ribonuclease HII (277 aa).

The region spanning 20–250 (KLIIGLDEAG…SKKLLKKIED (231 aa)) is the RNase H type-2 domain. 3 residues coordinate a divalent metal cation: Asp-26, Glu-27, and Asp-141.

The protein belongs to the RNase HII family. Mn(2+) is required as a cofactor. The cofactor is Mg(2+).

Its subcellular location is the cytoplasm. It carries out the reaction Endonucleolytic cleavage to 5'-phosphomonoester.. Endonuclease that specifically degrades the RNA of RNA-DNA hybrids. The polypeptide is Ribonuclease HII (Methanococcus aeolicus (strain ATCC BAA-1280 / DSM 17508 / OCM 812 / Nankai-3)).